A 431-amino-acid polypeptide reads, in one-letter code: Adenylosuccinate synthetase (431 aa).

Residues 12-18 (GDEGKGK) and 40-42 (GHT) each bind GTP. D13 functions as the Proton acceptor in the catalytic mechanism. Positions 13 and 40 each coordinate Mg(2+). IMP-binding positions include 13–16 (DEGK), 38–41 (NAGH), T129, R143, Q224, T239, and R303. The Proton donor role is filled by H41. 299-305 (VTTGRAR) serves as a coordination point for substrate. GTP-binding positions include R305, 331-333 (KLD), and 413-415 (GVG).

This sequence belongs to the adenylosuccinate synthetase family. As to quaternary structure, homodimer. Mg(2+) is required as a cofactor.

It localises to the cytoplasm. It carries out the reaction IMP + L-aspartate + GTP = N(6)-(1,2-dicarboxyethyl)-AMP + GDP + phosphate + 2 H(+). Its pathway is purine metabolism; AMP biosynthesis via de novo pathway; AMP from IMP: step 1/2. Functionally, plays an important role in the de novo pathway of purine nucleotide biosynthesis. Catalyzes the first committed step in the biosynthesis of AMP from IMP. This chain is Adenylosuccinate synthetase, found in Mycobacterium sp. (strain KMS).